We begin with the raw amino-acid sequence, 256 residues long: Adenosylcobinamide-GDP ribazoletransferase (256 aa).

A run of 6 helical transmembrane segments spans residues 40 to 60, 64 to 84, 114 to 134, 143 to 163, 194 to 214, and 234 to 254; these read YFPL…WLVL, PAQG…TGAF, IGAF…QLLS, ILVA…SHLL, VVPL…GLIL, and CLGM…LAWM.

The protein belongs to the CobS family. Mg(2+) serves as cofactor.

It is found in the cell inner membrane. It catalyses the reaction alpha-ribazole + adenosylcob(III)inamide-GDP = adenosylcob(III)alamin + GMP + H(+). It carries out the reaction alpha-ribazole 5'-phosphate + adenosylcob(III)inamide-GDP = adenosylcob(III)alamin 5'-phosphate + GMP + H(+). Its pathway is cofactor biosynthesis; adenosylcobalamin biosynthesis; adenosylcobalamin from cob(II)yrinate a,c-diamide: step 7/7. Joins adenosylcobinamide-GDP and alpha-ribazole to generate adenosylcobalamin (Ado-cobalamin). Also synthesizes adenosylcobalamin 5'-phosphate from adenosylcobinamide-GDP and alpha-ribazole 5'-phosphate. The chain is Adenosylcobinamide-GDP ribazoletransferase from Ralstonia pickettii (strain 12J).